A 334-amino-acid chain; its full sequence is UL-16 binding protein 5 (334 aa).

The first 25 residues, 1–25, serve as a signal peptide directing secretion; that stretch reads MAAAASPAFLLRLPLLLLLSSWCRT. Residues 26-223 lie on the Extracellular side of the membrane; sequence GLADPHSLCY…TMSSGTAQPR (198 aa). The segment at 29–117 is MHC class I alpha-1 like; sequence DPHSLCYDIT…IQLENYIPKE (89 aa). Cys50 and Cys66 form a disulfide bridge. An N-linked (GlcNAc...) asparagine glycan is attached at Asn82. The tract at residues 118–210 is MHC class I alpha-2 like; the sequence is PLTLQARMSC…MDSTLEPSAG (93 aa). A disulfide bond links Cys127 and Cys190. Residue Gly218 is the site of GPI-anchor amidated glycine attachment. Residues 219 to 334 constitute a propeptide, removed in mature form; it reads TAQPRATATT…YSEPLQVSIS (116 aa). A helical transmembrane segment spans residues 224-243; the sequence is ATATTLILCCLLIMCLLICS. At 244-334 the chain is on the cytoplasmic side; it reads RHSLTQSHGH…YSEPLQVSIS (91 aa).

The protein belongs to the MHC class I family. Interacts with KLRK1/NKG2D. In terms of assembly, (Microbial infection) In CMV-infected cells, interacts with the viral glycoprotein UL16; this interaction causes RAET1G retention in the endoplasmic reticulum and cis-Golgi and prevents binding to and activation of KLRK1/NKG2D, providing CMV with an immune evasion mechanism. The functional form is cleaved C-terminally of the GPI-anchor and yields a 28 kDa protein. In terms of tissue distribution, isoform 1 is highly expressed in colon and in a number of tumor cell lines and highly restricted in normal tissues. Both isoforms are frequently expressed in cell lines derived from epithelial cancers, and in primary breast cancers.

The protein localises to the cell membrane. It is found in the endoplasmic reticulum. It localises to the secreted. Functionally, binds and activates the KLRK1/NKG2D receptor, mediating natural killer cell cytotoxicity. Its function is as follows. Down-regulates the expression of KLRK1 and stimulates natural killer cells to secrete IFNG. Stimulates natural killer cells to secrete IFNG. This Homo sapiens (Human) protein is UL-16 binding protein 5.